The chain runs to 241 residues: Acyl-protein thioesterase 1 (241 aa).

Active-site charge relay system residues include Ser-122, Asp-178, and His-211.

This sequence belongs to the AB hydrolase superfamily. AB hydrolase 2 family.

It localises to the cytoplasm. Its subcellular location is the nucleus. The enzyme catalyses S-hexadecanoyl-L-cysteinyl-[protein] + H2O = L-cysteinyl-[protein] + hexadecanoate + H(+). Hydrolyzes fatty acids from S-acylated cysteine residues in proteins with a strong preference for palmitoylated G-alpha proteins over other acyl substrates. Mediates the deacylation of G-alpha proteins such as GPA1 in vivo, but has weak or no activity toward palmitoylated Ras proteins. Has weak lysophospholipase activity in vitro; however such activity may not exist in vivo. The protein is Acyl-protein thioesterase 1 of Aspergillus fumigatus (strain ATCC MYA-4609 / CBS 101355 / FGSC A1100 / Af293) (Neosartorya fumigata).